Here is a 517-residue protein sequence, read N- to C-terminus: MEELQLQGYLEKDGFRQQNFLYPLIFQEYIYTLAHDHGLNSSIFYEPMEIVGLGYDNKSSSVLVKRLITRMYQQNSLIYSMNDFNQNRFVGHNNSFYSNFYSKMVSEGFAVIVEIPFSLRLVPSSEEIPKSQNLRSIHSIFPFLEDKLSHLNYVLDILIPYPIHLEILVKILQCWIQDVPSLHFLRFFLHEFHNWNNLITPTKSISVFSKENKRLFRILYNSYVSEYEFVFVFLRKQSYYLRSTSSGAFLERTHFYVKIEHLIDVCHNHFQKILWFFKDSFMHYVRYKGKAILASRGTYLLIKKWKCYLVNFWQYNLNFWSKPYRIHINPFSNYSFYFLGYISSVLINPSAVKNQMLENFYLVDTLTQKFDTIVPVIPLIGSLSKAKFCTILGHPISKPIWAELSDSDIIDRFGRICRNLSHYHSGSSKKQSLYRIKYILRLSCARTLARKHKSTVRNLLQRLGSGLLEEFFTEEEQVISPIFQKTTLFPLHGSHRERIWYLDITRINDLANYLDWS.

This sequence belongs to the intron maturase 2 family. MatK subfamily.

The protein resides in the plastid. The protein localises to the chloroplast. In terms of biological role, usually encoded in the trnK tRNA gene intron. Probably assists in splicing its own and other chloroplast group II introns. The polypeptide is Maturase K (Paris tetraphylla).